A 307-amino-acid chain; its full sequence is Membrane protein insertase YidC 2 (307 aa).

Positions 1-23 (MKLTLNRILFSGLALSILFTLTG) are cleaved as a signal peptide. Residue C24 is the site of N-palmitoyl cysteine attachment. A lipid anchor (S-diacylglycerol cysteine) is attached at C24. 5 consecutive transmembrane segments (helical) span residues 58–78 (LGYG…ILPL), 135–155 (LGGI…AMYF), 179–199 (VLTA…MMAV), 209–225 (TMMY…SFSL), and 231–251 (LYWL…TYLL). Residues 263–307 (YAKTPPKAYQSTSSRKDVTPSQNMEQANLPKKIKSNRNAGKQRKR) form a disordered region. The span at 271–288 (YQSTSSRKDVTPSQNMEQ) shows a compositional bias: polar residues. Over residues 293-307 (KKIKSNRNAGKQRKR) the composition is skewed to basic residues.

It belongs to the OXA1/ALB3/YidC family. Type 2 subfamily.

Its subcellular location is the cell membrane. Required for the insertion and/or proper folding and/or complex formation of integral membrane proteins into the membrane. Involved in integration of membrane proteins that insert both dependently and independently of the Sec translocase complex, as well as at least some lipoproteins. This Streptococcus pyogenes serotype M18 (strain MGAS8232) protein is Membrane protein insertase YidC 2.